Here is a 304-residue protein sequence, read N- to C-terminus: Acetyl-coenzyme A carboxylase carboxyl transferase subunit beta (304 aa).

Residues Val23 to Val292 form the CoA carboxyltransferase N-terminal domain. Positions 27, 30, 46, and 49 each coordinate Zn(2+). The C4-type zinc-finger motif lies at Cys27–Cys49. The tract at residues Asn284–Ala304 is disordered. The span at Pro295–Ala304 shows a compositional bias: pro residues.

The protein belongs to the AccD/PCCB family. Acetyl-CoA carboxylase is a heterohexamer composed of biotin carboxyl carrier protein (AccB), biotin carboxylase (AccC) and two subunits each of ACCase subunit alpha (AccA) and ACCase subunit beta (AccD). Zn(2+) serves as cofactor.

The protein resides in the cytoplasm. The catalysed reaction is N(6)-carboxybiotinyl-L-lysyl-[protein] + acetyl-CoA = N(6)-biotinyl-L-lysyl-[protein] + malonyl-CoA. The protein operates within lipid metabolism; malonyl-CoA biosynthesis; malonyl-CoA from acetyl-CoA: step 1/1. In terms of biological role, component of the acetyl coenzyme A carboxylase (ACC) complex. Biotin carboxylase (BC) catalyzes the carboxylation of biotin on its carrier protein (BCCP) and then the CO(2) group is transferred by the transcarboxylase to acetyl-CoA to form malonyl-CoA. The polypeptide is Acetyl-coenzyme A carboxylase carboxyl transferase subunit beta (Escherichia coli O139:H28 (strain E24377A / ETEC)).